A 440-amino-acid chain; its full sequence is C4-dicarboxylate transport protein (440 aa).

8 consecutive transmembrane segments (helical) span residues 8 to 28 (LYLQVLLAVVLGALVGHLFPA), 40 to 60 (FIKLVKMLIAPIVFATVVTGI), 74 to 94 (LKGLLYFEVLTTVALAIGLVV), 147 to 167 (GDILQVLLFSVLFGAALAALK), 187 to 207 (IVGFVMRLAPVGAFGAMAFTV), 221 to 241 (LIACFYATSALFVVLMLGLVL), 288 to 308 (VVGLVVPMGYSFNLDGTSIYL), and 354 to 374 (AATLSAVGNIPVAGLALLLGV). The tract at residues 419–440 (EEVEPANEPEPPAVPAGAGLHG) is disordered.

It belongs to the dicarboxylate/amino acid:cation symporter (DAACS) (TC 2.A.23) family.

It is found in the cell inner membrane. In terms of biological role, responsible for the transport of dicarboxylates such as succinate, fumarate, and malate from the periplasm across the membrane. The sequence is that of C4-dicarboxylate transport protein from Anaeromyxobacter dehalogenans (strain 2CP-1 / ATCC BAA-258).